The chain runs to 275 residues: PE family protein PE8 (275 aa).

In terms of domain architecture, PE spans 5–93 (KTVPEELTAA…AGTYGVTESL (89 aa)).

This sequence belongs to the mycobacterial PE family. In terms of assembly, forms a heterodimer with PPE15. The dimer forms a 1:1:1 heterotrimeric complex with EspG5.

The protein resides in the secreted. Its subcellular location is the cell wall. Functionally, promotes the intracellular survival of recombinant Mycobacterium within macrophages by regulating host inflammatory cytokines production and inhibiting cell late apoptosis. In Mycobacterium tuberculosis (strain ATCC 25618 / H37Rv), this protein is PE family protein PE8.